A 69-amino-acid polypeptide reads, in one-letter code: Cell division protein ZapB (69 aa).

A coiled-coil region spans residues 3–60 (LELFNQLEQKVQNAVETIEMLKMEAEELREENTRLKQERDEWERRLNGLLGKFQEIED).

Belongs to the ZapB family. Homodimer. The ends of the coiled-coil dimer bind to each other, forming polymers. Interacts with FtsZ.

Its subcellular location is the cytoplasm. Its function is as follows. Non-essential, abundant cell division factor that is required for proper Z-ring formation. It is recruited early to the divisome by direct interaction with FtsZ, stimulating Z-ring assembly and thereby promoting cell division earlier in the cell cycle. Its recruitment to the Z-ring requires functional FtsA or ZipA. In Chromohalobacter salexigens (strain ATCC BAA-138 / DSM 3043 / CIP 106854 / NCIMB 13768 / 1H11), this protein is Cell division protein ZapB.